The following is a 383-amino-acid chain: Na(+)/H(+) antiporter NhaA (383 aa).

The next 11 membrane-spanning stretches (helical) occupy residues 10–30, 56–76, 91–111, 121–141, 150–170, 174–194, 206–226, 254–274, 289–308, 327–347, and 355–375; these read LIGG…NNSP, LMHW…GLEI, IITP…IYLS, GWAI…ALLG, LLVI…IAIF, SLSL…IICN, VVLG…ATLA, PWII…ISFS, IIWG…LAVF, GISL…VLAF, and AIKI…YIVL.

The protein belongs to the NhaA Na(+)/H(+) (TC 2.A.33) antiporter family.

Its subcellular location is the cell inner membrane. The catalysed reaction is Na(+)(in) + 2 H(+)(out) = Na(+)(out) + 2 H(+)(in). Functionally, na(+)/H(+) antiporter that extrudes sodium in exchange for external protons. This chain is Na(+)/H(+) antiporter NhaA, found in Francisella tularensis subsp. mediasiatica (strain FSC147).